A 329-amino-acid polypeptide reads, in one-letter code: Glycerol-3-phosphate dehydrogenase [NAD(P)+] (329 aa).

3 residues coordinate NADPH: Trp-11, Arg-30, and Lys-103. Sn-glycerol 3-phosphate contacts are provided by Lys-103, Gly-132, and Ser-134. Ala-136 serves as a coordination point for NADPH. Lys-187, Asp-240, Ser-250, Arg-251, and Asn-252 together coordinate sn-glycerol 3-phosphate. The active-site Proton acceptor is Lys-187. Arg-251 serves as a coordination point for NADPH. Residues Val-275 and Glu-277 each coordinate NADPH.

The protein belongs to the NAD-dependent glycerol-3-phosphate dehydrogenase family.

It localises to the cytoplasm. The enzyme catalyses sn-glycerol 3-phosphate + NAD(+) = dihydroxyacetone phosphate + NADH + H(+). The catalysed reaction is sn-glycerol 3-phosphate + NADP(+) = dihydroxyacetone phosphate + NADPH + H(+). It functions in the pathway membrane lipid metabolism; glycerophospholipid metabolism. Its function is as follows. Catalyzes the reduction of the glycolytic intermediate dihydroxyacetone phosphate (DHAP) to sn-glycerol 3-phosphate (G3P), the key precursor for phospholipid synthesis. The polypeptide is Glycerol-3-phosphate dehydrogenase [NAD(P)+] (Nitrosomonas eutropha (strain DSM 101675 / C91 / Nm57)).